Consider the following 318-residue polypeptide: uncharacterized protein (318 aa).

4 helical membrane passes run 112 to 132, 147 to 167, 209 to 229, and 237 to 257; these read VIGVLSFLFSKFVFTLVPVFL, IAIESLFKLILLLGYIYFLSM, CGSSFILFTIIVGMFVYLLVP, and VIDRVALIPVVLGISFEVLQL.

The protein localises to the cell membrane. This is an uncharacterized protein from Bacillus subtilis (strain 168).